Reading from the N-terminus, the 248-residue chain is MSTVDKEELVQKAKLAEQSERYDDMAQAMKSVTETGVELSNEERNLLSVAYKNVVGARRSSWRVISSIEQKTEASARKQQLAREYRERVEKELREICYEVLGLLDKYLIPKASNPESKVFYLKMKGDYYRYLAEVATGDARNTVVDDSQTAYQDAFDISKGKMQPTHPIRLGLALNFSVFYYEILNSPDKACQLAKQAFDDAIAELDTLNEDSYKDSTLIMQLLRDNLTLWTSDTQGDEAEPQEGGDN.

Belongs to the 14-3-3 family. Homodimer; homodimerization is not essential for modulating the activity of Slo. Interacts with phosphorylated Slob; the interaction with Slob mediates an indirect interaction with Slo. Interacts with phosphorylated yki. Interacts with hemo; this represses 14-3-3zeta activity which prevents the 14-3-3zeta-mediated activation of phosphoinositide 3-kinase Pi3K68D. This, in turn, inhibits the Pi3K68D-mediated conversion of phosphatidylinositol to phosphatidylinositol-3-phosphate and prevents progression of early endosomes through the maturation process which regulates subsequent steps of phagocytic processing. Interacts with REPTOR (when phosphorylated), this interaction may assist the cytoplasmic retention of REPTOR. In terms of tissue distribution, predominantly expressed in the ventral nerve cord of the embryo, and in the neural tissues of the head. Also found in the region posterior to the morphogenetic furrow of the eye imaginal disk where cells differentiate as photoreceptors.

It localises to the cytoplasm. Its subcellular location is the early endosome. In terms of biological role, required in Raf-dependent cell proliferation and photoreceptor differentiation during eye development. Acts upstream of Raf and downstream of Ras, and is essential for viability. Acts as a negative regulator of the slo calcium channel via its interaction with slo-binding protein slob. Inhibits yki activity by restricting its nuclear localization. Binds to and promotes the activity of phosphoinositide 3-kinase Pi3K68D which converts phosphatidylinositol to phosphatidylinositol-3-phosphate and promotes maturation of early endosomes. In Drosophila melanogaster (Fruit fly), this protein is 14-3-3 protein zeta (14-3-3zeta).